The sequence spans 473 residues: GTPase Der (473 aa).

2 consecutive EngA-type G domains span residues 3-167 (FTVA…GKDR) and 203-378 (LRVA…RVWN). GTP contacts are provided by residues 9–16 (GRPNVGKS), 56–60 (DTAGL), 119–122 (NKSE), 209–216 (GRPNAGKS), 256–260 (DTAGM), and 321–324 (NKWD). Positions 379–463 (KRISTARLNR…PIRIHFRSPD (85 aa)) constitute a KH-like domain.

It belongs to the TRAFAC class TrmE-Era-EngA-EngB-Septin-like GTPase superfamily. EngA (Der) GTPase family. Associates with the 50S ribosomal subunit.

Functionally, GTPase that plays an essential role in the late steps of ribosome biogenesis. This is GTPase Der from Rhizobium etli (strain ATCC 51251 / DSM 11541 / JCM 21823 / NBRC 15573 / CFN 42).